The following is a 461-amino-acid chain: Phosphoglucosamine mutase (461 aa).

Catalysis depends on Ser113, which acts as the Phosphoserine intermediate. 4 residues coordinate Mg(2+): Ser113, Asp251, Asp253, and Asp255. At Ser113 the chain carries Phosphoserine.

This sequence belongs to the phosphohexose mutase family. It depends on Mg(2+) as a cofactor. Post-translationally, activated by phosphorylation.

The catalysed reaction is alpha-D-glucosamine 1-phosphate = D-glucosamine 6-phosphate. Catalyzes the conversion of glucosamine-6-phosphate to glucosamine-1-phosphate. This is Phosphoglucosamine mutase from Prochlorococcus marinus (strain SARG / CCMP1375 / SS120).